We begin with the raw amino-acid sequence, 444 residues long: CCA-adding enzyme (444 aa).

Ser57 and Arg60 together coordinate ATP. Ser57 and Arg60 together coordinate CTP. Mg(2+) contacts are provided by Asp69, Asp71, and Asp124. ATP contacts are provided by His147, Lys168, and Tyr177. Residues His147, Lys168, and Tyr177 each contribute to the CTP site.

This sequence belongs to the tRNA nucleotidyltransferase/poly(A) polymerase family. Archaeal CCA-adding enzyme subfamily. In terms of assembly, homodimer. Mg(2+) serves as cofactor.

It carries out the reaction a tRNA precursor + 2 CTP + ATP = a tRNA with a 3' CCA end + 3 diphosphate. The catalysed reaction is a tRNA with a 3' CCA end + 2 CTP + ATP = a tRNA with a 3' CCACCA end + 3 diphosphate. Its function is as follows. Catalyzes the addition and repair of the essential 3'-terminal CCA sequence in tRNAs without using a nucleic acid template. Adds these three nucleotides in the order of C, C, and A to the tRNA nucleotide-73, using CTP and ATP as substrates and producing inorganic pyrophosphate. tRNA 3'-terminal CCA addition is required both for tRNA processing and repair. Also involved in tRNA surveillance by mediating tandem CCA addition to generate a CCACCA at the 3' terminus of unstable tRNAs. While stable tRNAs receive only 3'-terminal CCA, unstable tRNAs are marked with CCACCA and rapidly degraded. The polypeptide is CCA-adding enzyme (Methanococcus maripaludis (strain C7 / ATCC BAA-1331)).